The sequence spans 932 residues: DNA mismatch repair protein MutS (932 aa).

615–622 lines the ATP pocket; sequence GPNMAGKS.

Belongs to the DNA mismatch repair MutS family.

In terms of biological role, this protein is involved in the repair of mismatches in DNA. It is possible that it carries out the mismatch recognition step. This protein has a weak ATPase activity. This chain is DNA mismatch repair protein MutS, found in Clostridium botulinum (strain Okra / Type B1).